Here is a 387-residue protein sequence, read N- to C-terminus: Protein-glutamate methylesterase/protein-glutamine glutaminase 2 (387 aa).

The 118-residue stretch at 4–121 folds into the Response regulatory domain; the sequence is KVLVVDDSGF…SRNPQKVKQL (118 aa). D55 is subject to 4-aspartylphosphate. The segment covering 148-183 has biased composition (low complexity); that stretch reads AAPAAPTSSSRAPAPTTAPARAVPTRTAAPATAPAA. The tract at residues 148 to 199 is disordered; the sequence is AAPAAPTSSSRAPAPTTAPARAVPTRTAAPATAPAAHAHHAPAHPTTSGTPK. A CheB-type methylesterase domain is found at 192–384; that stretch reads PTTSGTPKRK…LDDIGRHLVE (193 aa). Catalysis depends on residues S211, H238, and D331.

This sequence belongs to the CheB family. Post-translationally, phosphorylated by CheA. Phosphorylation of the N-terminal regulatory domain activates the methylesterase activity.

The protein resides in the cytoplasm. It carries out the reaction [protein]-L-glutamate 5-O-methyl ester + H2O = L-glutamyl-[protein] + methanol + H(+). The catalysed reaction is L-glutaminyl-[protein] + H2O = L-glutamyl-[protein] + NH4(+). In terms of biological role, involved in chemotaxis. Part of a chemotaxis signal transduction system that modulates chemotaxis in response to various stimuli. Catalyzes the demethylation of specific methylglutamate residues introduced into the chemoreceptors (methyl-accepting chemotaxis proteins or MCP) by CheR. Also mediates the irreversible deamidation of specific glutamine residues to glutamic acid. The protein is Protein-glutamate methylesterase/protein-glutamine glutaminase 2 of Pseudomonas savastanoi pv. phaseolicola (strain 1448A / Race 6) (Pseudomonas syringae pv. phaseolicola (strain 1448A / Race 6)).